The primary structure comprises 196 residues: Superoxide dismutase [Fe] (196 aa).

4 residues coordinate Fe cation: histidine 20, histidine 68, aspartate 157, and histidine 161.

This sequence belongs to the iron/manganese superoxide dismutase family. As to quaternary structure, homotetramer. Fe cation serves as cofactor.

It catalyses the reaction 2 superoxide + 2 H(+) = H2O2 + O2. Destroys superoxide anion radicals which are normally produced within the cells and which are toxic to biological systems. The sequence is that of Superoxide dismutase [Fe] from Tetrahymena pyriformis.